A 375-amino-acid chain; its full sequence is Proclotting enzyme (375 aa).

Residues Met-1–Cys-21 form the signal peptide. The propeptide occupies Ser-22–Gln-27. Gln-30 is subject to Pyrrolidone carboxylic acid. One can recognise a Clip domain in the interval Leu-39–Cys-84. 3 cysteine pairs are disulfide-bonded: Cys-40-Cys-83, Cys-50-Cys-73, and Cys-56-Cys-84. The disordered stretch occupies residues Val-90–Asn-113. Intrachain disulfides connect Cys-118/Cys-248, Cys-157/Cys-173, Cys-295/Cys-311, and Cys-322/Cys-351. The N-linked (GlcNAc...) asparagine glycan is linked to Asn-122. Positions Ile-128 to Val-375 constitute a Peptidase S1 domain. The active-site Charge relay system is His-172. 4 residues coordinate Ca(2+): Glu-194, Asn-196, Ser-199, and Asp-202. The active-site Charge relay system is the Asp-228. 2 N-linked (GlcNAc...) asparagine glycosylation sites follow: Asn-235 and Asn-304. The active-site Charge relay system is Ser-326.

It belongs to the peptidase S1 family. CLIP subfamily. As to quaternary structure, in the active form, heterodimer of a light chain and a heavy chain; disulfide-linked. Forms a covalent heterodimer with intracellular coagulation inhibitor 2/LICI-2. In terms of processing, proteolytically cleaved into its mature active form by serine protease factor B. Cleavage produces a 25 kDa light chain containing the CLIP domain and a catalytic 31 kDa heavy chain which remain covalently associated through an interchain disulfide bond. Proteolytically cleaved by clotting factor G subunit beta. Post-translationally, contains six O-linked carbohydrate chains in the N-terminal light chain. Expressed in hemocytes (at protein level).

The protein resides in the cytoplasmic vesicle. It localises to the secretory vesicle. Its subcellular location is the secreted. The enzyme catalyses Selective cleavage of 18-Arg-|- and 47-Arg-|- bonds in coagulogen to form coagulin and fragments.. Inhibited by intracellular coagulation inhibitor 2/LICI-2 and to a lesser extent by intracellular coagulation inhibitor 3/LICI-3. Its function is as follows. This enzyme is closely associated with an endotoxin-sensitive hemolymph coagulation system in limulus. Its active form catalyzes the conversion of coagulogen to insoluble coagulin gel. The sequence is that of Proclotting enzyme from Tachypleus tridentatus (Japanese horseshoe crab).